The following is a 239-amino-acid chain: Phosphoribosylaminoimidazole-succinocarboxamide synthase (239 aa).

This sequence belongs to the SAICAR synthetase family.

The enzyme catalyses 5-amino-1-(5-phospho-D-ribosyl)imidazole-4-carboxylate + L-aspartate + ATP = (2S)-2-[5-amino-1-(5-phospho-beta-D-ribosyl)imidazole-4-carboxamido]succinate + ADP + phosphate + 2 H(+). Its pathway is purine metabolism; IMP biosynthesis via de novo pathway; 5-amino-1-(5-phospho-D-ribosyl)imidazole-4-carboxamide from 5-amino-1-(5-phospho-D-ribosyl)imidazole-4-carboxylate: step 1/2. The chain is Phosphoribosylaminoimidazole-succinocarboxamide synthase from Bacillus cereus (strain AH187).